Reading from the N-terminus, the 515-residue chain is tRNA-2-methylthio-N(6)-dimethylallyladenosine synthase (515 aa).

The MTTase N-terminal domain occupies 25 to 140; the sequence is KTYQVRTFGC…LPALLNRARH (116 aa). Residues Cys34, Cys69, Cys103, Cys177, Cys181, and Cys184 each coordinate [4Fe-4S] cluster. The Radical SAM core domain occupies 163-393; it reads RDSVYAGWVS…TALQDRIAAE (231 aa). A TRAM domain is found at 396-466; it reads AKQLGRKVEV…AFHLVADPAG (71 aa). Residues 482–515 form a disordered region; the sequence is DRSQADSCGVPAAGAASGKAGVSLGMPSLPTRRA. Residues 490–506 are compositionally biased toward low complexity; the sequence is GVPAAGAASGKAGVSLG.

Belongs to the methylthiotransferase family. MiaB subfamily. Monomer. Requires [4Fe-4S] cluster as cofactor.

Its subcellular location is the cytoplasm. It carries out the reaction N(6)-dimethylallyladenosine(37) in tRNA + (sulfur carrier)-SH + AH2 + 2 S-adenosyl-L-methionine = 2-methylsulfanyl-N(6)-dimethylallyladenosine(37) in tRNA + (sulfur carrier)-H + 5'-deoxyadenosine + L-methionine + A + S-adenosyl-L-homocysteine + 2 H(+). In terms of biological role, catalyzes the methylthiolation of N6-(dimethylallyl)adenosine (i(6)A), leading to the formation of 2-methylthio-N6-(dimethylallyl)adenosine (ms(2)i(6)A) at position 37 in tRNAs that read codons beginning with uridine. This Paenarthrobacter aurescens (strain TC1) protein is tRNA-2-methylthio-N(6)-dimethylallyladenosine synthase.